The primary structure comprises 199 residues: Proteasome subunit beta type-2-B (199 aa).

An N-acetylmethionine modification is found at M1.

The protein belongs to the peptidase T1B family. In terms of assembly, component of the 20S core complex of the 26S proteasome. The 26S proteasome is composed of a core protease (CP), known as the 20S proteasome, capped at one or both ends by the 19S regulatory particle (RP/PA700). The 20S proteasome core is composed of 28 subunits that are arranged in four stacked rings, resulting in a barrel-shaped structure. The two end rings are each formed by seven alpha subunits, and the two central rings are each formed by seven beta subunits. The catalytic chamber with the active sites is on the inside of the barrel. Ubiquitous low levels, higher expression in siliques and flowers.

It is found in the cytoplasm. The protein localises to the nucleus. Non-catalytic component of the proteasome, a multicatalytic proteinase complex which is characterized by its ability to cleave peptides with Arg, Phe, Tyr, Leu, and Glu adjacent to the leaving group at neutral or slightly basic pH. The proteasome has an ATP-dependent proteolytic activity. This Arabidopsis thaliana (Mouse-ear cress) protein is Proteasome subunit beta type-2-B (PBD2).